Consider the following 157-residue polypeptide: Ribosome maturation factor RimP (157 aa).

It belongs to the RimP family.

The protein localises to the cytoplasm. Required for maturation of 30S ribosomal subunits. The polypeptide is Ribosome maturation factor RimP (Lactococcus lactis subsp. lactis (strain IL1403) (Streptococcus lactis)).